Reading from the N-terminus, the 392-residue chain is Integrin-linked kinase-associated serine/threonine phosphatase 2C (392 aa).

The residue at position 1 (M1) is an N-acetylmethionine. Residues 1–90 (MDLFGDLPEP…TSEEEKNGSE (90 aa)) are disordered. Position 13 is a phosphoserine (S13). Polar residues predominate over residues 56–70 (SGDSGSLATSISQMV). A compositionally biased stretch (basic and acidic residues) spans 72–90 (TEGKGAKRKTSEEEKNGSE). The PPM-type phosphatase domain occupies 108 to 390 (KGYVAERKGE…DNVTVMVVRI (283 aa)). Positions 152 and 153 each coordinate Mn(2+). K210 carries the post-translational modification N6-acetyllysine. Residues D326 and D381 each coordinate Mn(2+).

The protein belongs to the PP2C family. As to quaternary structure, interacts with ILK. Specific association with ILK is independent of the catalytic activity of either partner. It depends on Mg(2+) as a cofactor. Mn(2+) is required as a cofactor. In terms of tissue distribution, widely expressed. Highest levels expressed in striated muscle. Much lower levels evident in various smooth muscle tissues.

Its subcellular location is the cytoplasm. The catalysed reaction is O-phospho-L-seryl-[protein] + H2O = L-seryl-[protein] + phosphate. It carries out the reaction O-phospho-L-threonyl-[protein] + H2O = L-threonyl-[protein] + phosphate. With respect to regulation, inhibited rather than stimulated by magnesium. In terms of biological role, protein phosphatase that may play a role in regulation of cell cycle progression via dephosphorylation of its substrates whose appropriate phosphorylation states might be crucial for cell proliferation. Selectively associates with integrin linked kinase (ILK), to modulate cell adhesion and growth factor signaling. Inhibits the ILK-GSK3B signaling axis and may play an important role in inhibiting oncogenic transformation. The polypeptide is Integrin-linked kinase-associated serine/threonine phosphatase 2C (ILKAP) (Homo sapiens (Human)).